A 324-amino-acid chain; its full sequence is GTP cyclohydrolase 1 (324 aa).

Disordered regions lie at residues 33–59 (GRNNSVCSTSSTSGTSSLADRQQNQAE) and 79–119 (VPLA…TPGH). Low complexity predominate over residues 40–49 (STSSTSGTSS). Polar residues-rich tracts occupy residues 50–59 (LADRQQNQAE) and 93–117 (TNGSSPDSDGTQPKTPLTPRTSTTP). C214, H217, and C285 together coordinate Zn(2+).

Belongs to the GTP cyclohydrolase I family. In terms of assembly, toroid-shaped homodecamer, composed of two pentamers of five dimers. As to expression, isoform B is expressed almost exclusively in adult heads.

It catalyses the reaction GTP + H2O = 7,8-dihydroneopterin 3'-triphosphate + formate + H(+). It functions in the pathway cofactor biosynthesis; 7,8-dihydroneopterin triphosphate biosynthesis; 7,8-dihydroneopterin triphosphate from GTP: step 1/1. In terms of biological role, isoform B is required for eye pigment production, Isoform C may be required for normal embryonic development and segment pattern formation. The chain is GTP cyclohydrolase 1 (Pu) from Drosophila melanogaster (Fruit fly).